Here is a 716-residue protein sequence, read N- to C-terminus: Radial spoke head protein 4 homolog A (716 aa).

Disordered stretches follow at residues 1 to 164 (MEDS…CGRR), 375 to 410 (EGEDEEEVEEEDVAEERDNGESEAHEDEEDELPKSF), 506 to 526 (GEEEGEEEEEAEGGRNSFEEN), and 697 to 716 (LLAAENEESEEDEDEEDDYD). The segment covering 8 to 25 (KQEKENQEELGETRRPWE) has biased composition (basic and acidic residues). Composition is skewed to low complexity over residues 29–42 (AASPQYSEPESSEP), 54–66 (QSRSSRPWSPQSR), and 80–100 (SSPAPVSPREPSSSPSPLAPA). Residues 140–156 (HHTSQSEGNTFQQSQQP) are compositionally biased toward polar residues. Positions 375-389 (EGEDEEEVEEEDVAE) are enriched in acidic residues. Residue S396 is modified to Phosphoserine. 2 stretches are compositionally biased toward acidic residues: residues 506–516 (GEEEGEEEEEA) and 701–716 (ENEESEEDEDEEDDYD).

The protein belongs to the flagellar radial spoke RSP4/6 family. As to quaternary structure, interacts with RSPH6A. As to expression, expressed in trachea, lungs, and testes. Very strong expression is detected in nasal brushings.

The protein resides in the cytoplasm. It localises to the cytoskeleton. The protein localises to the cilium axoneme. Its subcellular location is the cell projection. It is found in the cilium. Component of the axonemal radial spoke head which plays an important role in ciliary motility. Essential for triplet radial spokes (RS1, RS2 and RS3) head assembly in the motile cilia. This Homo sapiens (Human) protein is Radial spoke head protein 4 homolog A (RSPH4A).